Reading from the N-terminus, the 310-residue chain is Thioesterase pytI (310 aa).

The next 2 helical transmembrane spans lie at 14-34 and 95-115; these read SLTP…YFAL and LLGG…IFVA. Residues 168-195 are disordered; the sequence is TLSDDASTTTSSDNSRASTDHGADSEVE. A compositionally biased stretch (low complexity) spans 170-184; that stretch reads SDDASTTTSSDNSRA.

Belongs to the AMT4 thioesterase family.

It is found in the membrane. It functions in the pathway secondary metabolite biosynthesis. Thioesterase; part of the gene cluster that mediates the biosynthesis of pyranterreones, a family of antioxidative compounds. The first step of pyranonigrins biosynthesis is performed by the hybrid PKS-NRPS synthetase pytA that condenses 4 malonyl-CoA units ato the acetyl starter unit by the modular PKS of pytA. The acyl chain is then connected to an L-serine through the amide bond by the modular NRPS of pytA. A tetramic acid is formed and released from the PKS-NRPS pytA to give pyranterreone 5 with the help of the thioesterase pytI. Pyranterreone 5 could be methylated by pytC to afford pyranterreone 6. Both pyranterreones 5 and 6 are subsequently oxidized by the FAD-linked oxidoreductase pytB and the cytochrome P450 monooxygenase pytD to form the fused gamma-pyrone core, resulting in pyranterreones 7 and 11, respectively. The hydroxy group at C-8 of pyranterreones 7 and 11 are dehydrated by the aspartyl protease pytH to form a delta-7 double bond to give pyranterreones 3 and 1, 2 accordingly. The exo-methylene of pyranterreone 3 could be reduced into a pendant methyl by reductase pytE to provide pyranterreone 4, also known as cordylactam. Pyranterreone 4 can be reconverted to pyranterreone 3 through pytB-catalyzed dehydrogenation or further oxidized to pyranterreones 9 and 10. The sequence is that of Thioesterase pytI from Aspergillus terreus.